The following is a 369-amino-acid chain: MADREEALREFVAVTGAEEERARFFLESAGWDLQIALASFYEDGGDEDILTLPQPTPSSVSRGTAASDHRVTSFRDLVHAQEDDDEEEEGQRFYAGGSERSGQQIVGPPRKKSPNELVEDLFKGAKEHGAVAVDRTAKSSGESSKPKPFAGGGYRLGATPEEESAYVAGERRHNSVQDVHVVLKLWKTGFSLDSGELRSYQDPSNAQFLDDIRRGEVPAELRRLARGGQVNLDMEDHRDEEYVKPKSVFKAFTGEGQKLGSTAPQVLSTSSPAQQAENEAKASSAIAIDESEPVTNIQIRLADGGRLVQKFNHNHRIRDIRLFIVDARPAMAATSFVLMTTFPNKELTDENQTLKEANLLNAVIVQRLT.

Disordered stretches follow at residues 46–115 and 133–156; these read DEDI…KSPN and VDRT…GYRL. Positions 67-81 are enriched in basic and acidic residues; the sequence is SDHRVTSFRDLVHAQ. A Nuclear localization signal motif is present at residues 109 to 115; the sequence is PRKKSPN. The Nuclear localization signal motif lies at 172–175; that stretch reads RHNS. An SEP domain is found at 178-243; it reads DVHVVLKLWK…MEDHRDEEYV (66 aa). Positions 260–277 are enriched in polar residues; it reads GSTAPQVLSTSSPAQQAE. A disordered region spans residues 260–280; that stretch reads GSTAPQVLSTSSPAQQAENEA. A UBX domain is found at 291-367; sequence SEPVTNIQIR…NLLNAVIVQR (77 aa).

Belongs to the NSFL1C family.

The protein localises to the nucleus. The protein resides in the golgi apparatus. It is found in the golgi stack. Its subcellular location is the cytoplasm. It localises to the cytoskeleton. The protein localises to the microtubule organizing center. The protein resides in the centrosome. Reduces the ATPase activity of VCP. Necessary for the fragmentation of Golgi stacks during mitosis and for VCP-mediated reassembly of Golgi stacks after mitosis. May play a role in VCP-mediated formation of transitional endoplasmic reticulum (tER). Inhibits the activity of CTSL (in vitro). Together with UBXN2B/p37, regulates the centrosomal levels of kinase AURKA/Aurora A levels during mitotic progression by promoting AURKA removal from centrosomes in prophase. Also, regulates spindle orientation during mitosis. This chain is NSFL1 cofactor p47 (NSFL1C), found in Gallus gallus (Chicken).